A 343-amino-acid chain; its full sequence is Palmitoyltransferase ZDHHC4 (343 aa).

Topologically, residues 1-2 (MD) are lumenal. A helical membrane pass occupies residues 3 to 23 (FLVLFSFYLAFLLICVIMICI). Over 24 to 67 (FTKSQRLKAVVLGGAQVCARVTPQCFQRAVQTLLHQLFHTRHPA) the chain is Cytoplasmic. Residues 68-88 (FLALHLLLQGLVYAEYTYEVF) form a helical membrane-spanning segment. Residues 89 to 95 (SYCRELE) are Lumenal-facing. A helical transmembrane segment spans residues 96 to 116 (FSLPCLLLPYVLLSVNLVFFT). At 117 to 193 (LTCSTNPGTI…NCIGAWNTGY (77 aa)) the chain is on the cytoplasmic side. A DHHC domain is found at 149 to 199 (SRCSTCDLRKPARSKHCRVCDRCVHRFDHHCVWVNNCIGAWNTGYFLIYLL). The S-palmitoyl cysteine intermediate role is filled by cysteine 179. A helical transmembrane segment spans residues 194 to 214 (FLIYLLTLTASAATIAILSAA). Topologically, residues 215-255 (FLLRLVAVSNLYQETYLDDLGRFQAVDTGFLIQHLFLAFPR) are lumenal. A helical transmembrane segment spans residues 256–276 (IIFLLGFVIVLSLLLAGYLCF). Residues 277–343 (ALYLAATNQT…ATPSYKKKKR (67 aa)) are Cytoplasmic-facing. The Di-lysine motif motif lies at 340–343 (KKKR).

The protein belongs to the DHHC palmitoyltransferase family. Interacts with CPT1A.

It localises to the endoplasmic reticulum membrane. Its subcellular location is the golgi apparatus membrane. The protein resides in the cell membrane. It catalyses the reaction L-cysteinyl-[protein] + hexadecanoyl-CoA = S-hexadecanoyl-L-cysteinyl-[protein] + CoA. Palmitoyltransferase that could catalyze the addition of palmitate onto protein substrates including the D(2) dopamine receptor DRD2, GSK3B or MAVS. Mediates GSK3B palmitoylation to prevent its AKT1-mediated phosphorylation leading to activation of the STAT3 signaling pathway. Also catalyzes MAVS palmitoylation which promotes its stabilization and activation by inhibiting 'Lys-48'- but facilitating 'Lys-63'-linked ubiquitination. This is Palmitoyltransferase ZDHHC4 from Rattus norvegicus (Rat).